Reading from the N-terminus, the 155-residue chain is Large ribosomal subunit protein uL13 (155 aa).

Belongs to the universal ribosomal protein uL13 family. Part of the 50S ribosomal subunit.

This protein is one of the early assembly proteins of the 50S ribosomal subunit, although it is not seen to bind rRNA by itself. It is important during the early stages of 50S assembly. The chain is Large ribosomal subunit protein uL13 from Rickettsia rickettsii (strain Iowa).